Here is a 102-residue protein sequence, read N- to C-terminus: Trans-acting regulatory protein HvrA (102 aa).

A DNA-binding region spans residues 80-85 (RGRKPK).

It belongs to the histone-like protein H-NS family. In terms of assembly, homodimer that oligomerizes on DNA into higher-order complexes that form bridges between disparate regions of DNA compacting it.

Its subcellular location is the cytoplasm. It is found in the nucleoid. A dim-light trans-acting activator of Puf and Puh expression, that has no effect on the expression of the Puc operon. Responsible for regulating light-harvesting-I and reaction center structural gene expression differentially from that of light-harvesting-II expression in response to alterations in light. Proper light regulation of light-harvesting and reaction center polypeptide synthesis is an important physiological trait that enables cells to adapt to ever-changing environmental conditions of light intensity. The polypeptide is Trans-acting regulatory protein HvrA (hvrA) (Rhodobacter capsulatus (Rhodopseudomonas capsulata)).